Here is a 247-residue protein sequence, read N- to C-terminus: HTH-type transcriptional regulator SarU (247 aa).

2 consecutive DNA-binding regions (H-T-H motif) follow at residues 53–76 (LKEI…SLSK) and 178–201 (LKDL…RLNN).

It belongs to the SarA family.

The protein localises to the cytoplasm. Functionally, positive regulator of RNAII and RNAIII in a cell density-dependent manner. It can contribute to the expression of virulence genes controlled by agr. May also regulate target genes via an agr-independent pathway. The chain is HTH-type transcriptional regulator SarU (sarU) from Staphylococcus aureus (strain COL).